We begin with the raw amino-acid sequence, 144 residues long: Ribosomally synthesized cyclic peptide phomopsin precursor phomA' (144 aa).

The signal sequence occupies residues 1 to 18; that stretch reads MRFTPAIVIAAFCSLAVA. 9 propeptides span residues 19–35, 42–50, 57–65, 72–79, 86–94, 101–108, 115–123, 130–137, and K144; these read APAA…AVED, KKRGEAVED, and KRGEAVED.

PhomA' is processed by several endopeptidases including kexin proteases as well as the cluster-specific S41 family peptidase phomP1' and the peptidase phomG' to produce 5 identical copies of the hexapeptide Tyr-Val-Ile-Pro-Ile-Asp and 3 identical copies of Tyr-Val-Ile-Pro-Phe-Asp, that are further modified into phomapsins A and P, respectively. The timing and order of proteolysis of the phomA' precursor and PTMs are still unknown. Two tyrosinase-like enzyme phomQ1' and PhomQ2, catalyze the chlorination and hydroxylation of Tyr, respectively. PhomYb', is proposed to be involved in the construction of the macrocyclic structure. The other four ustYa family proteins may be involved in PTMs that generate the unique structure of phomopsin A. PhomYa' is required for the hydroxylation of C-beta of Tyr. PhomYc', PhomYd', and PhomYe' are responsible for the biosynthesis of 2,3-dehydroisoleucine (dIle), 2,3-dehydroaspartic acid (dAsp), and 3,4-dehydroproline (dPro), respectively. While dIle formation by phomYc is indispensable for the installation of dAsp by phomYd, the order of the other PTMs have not been elucidated yet. Most of the biosynthetic enzymes likely have broad substrate specificity, and thus, there might be a metabolic grid from a precursor to phomopsin A. The enzyme(s) responsible for the biosynthesis of 3,4-dehydrovaline (dVal) have also not been identified yet. Finally, PhomM' acts as an S-adenosylmethionine-dependent alpha-N-methyltransferase that catalyzes two successive N-methylation reactions, converting N-desmethyl-phomopsin A to phomopsin A and phomopsin A further to an N,N-dimethylated congener called phomopsin E.

Its pathway is mycotoxin biosynthesis. Functionally, ribosomally synthesized cyclic peptide phomopsin precursor; part of the gene cluster that mediates the biosynthesis of the phomopsins, a group of hexapeptide mycotoxins which infects lupins and causes lupinosis disease in livestock. The phomA' translated product contains a 5-fold repeated peptide embedding the hexapeptide Tyr-Val-Ile-Pro-Ile-Asp and a 3-fold repeated peptide embedding the hexapeptide Tyr-Val-Ile-Pro-Phe-Asp, that is converted into phomapsin A and phomapsin P, respectively. After being excised from the precursor peptide by kexin proteases, the core peptides are cyclized and modified post-translationally by enzymes encoded within the corresponding gene cluster. The sequence is that of Ribosomally synthesized cyclic peptide phomopsin precursor phomA' from Diaporthe leptostromiformis (Lupinosis disease fungus).